The sequence spans 312 residues: Serine/threonine-protein phosphatase PP1 isozyme 2 (312 aa).

At alanine 2 the chain carries N-acetylalanine. The Mn(2+) site is built by aspartate 70, histidine 72, aspartate 98, and asparagine 130. The Proton donor role is filled by histidine 131. Mn(2+) is bound by residues histidine 179 and histidine 254.

This sequence belongs to the PPP phosphatase family. PP-1 subfamily. As to quaternary structure, interacts with SRK2D/SNRK2.2 and SRK2E/SNRK2.6. Requires Mn(2+) as cofactor.

It localises to the nucleus. It is found in the cytoplasm. It carries out the reaction O-phospho-L-seryl-[protein] + H2O = L-seryl-[protein] + phosphate. The enzyme catalyses O-phospho-L-threonyl-[protein] + H2O = L-threonyl-[protein] + phosphate. With respect to regulation, phosphatase activity is strongly reduced by the protein phosphatase inhibitor 2 (I-2). Its function is as follows. Serine/threonine-protein phosphatase that possesses phosphatase activity toward para-nitrophenyl phosphate (pNPP) in vitro. The chain is Serine/threonine-protein phosphatase PP1 isozyme 2 from Arabidopsis thaliana (Mouse-ear cress).